Here is a 77-residue protein sequence, read N- to C-terminus: MARRGRPKRRKVCFFTANKITHIDYKDVDLLKRFISERGKILPRRVTGTSAKYQRKLTVAIKRARQVALLPYVNDVN.

Belongs to the bacterial ribosomal protein bS18 family. In terms of assembly, part of the 30S ribosomal subunit. Forms a tight heterodimer with protein bS6.

Functionally, binds as a heterodimer with protein bS6 to the central domain of the 16S rRNA, where it helps stabilize the platform of the 30S subunit. The chain is Small ribosomal subunit protein bS18 from Shouchella clausii (strain KSM-K16) (Alkalihalobacillus clausii).